An 89-amino-acid chain; its full sequence is Elongation factor 1-beta (89 aa).

Belongs to the EF-1-beta/EF-1-delta family.

Functionally, promotes the exchange of GDP for GTP in EF-1-alpha/GDP, thus allowing the regeneration of EF-1-alpha/GTP that could then be used to form the ternary complex EF-1-alpha/GTP/AAtRNA. The protein is Elongation factor 1-beta of Methanosarcina acetivorans (strain ATCC 35395 / DSM 2834 / JCM 12185 / C2A).